The chain runs to 523 residues: NADP-specific glutamate dehydrogenase (523 aa).

The tract at residues 26–50 (CARGRSAKRDVAAKRLRSRSPRMDA) is disordered. K202 is a catalytic residue.

It belongs to the Glu/Leu/Phe/Val dehydrogenases family. As to quaternary structure, homo- and heterohexamer of alpha and beta subunits. Both subunits are encoded by the same gene. In terms of processing, the N-termini of the alpha and the beta chains are blocked.

The protein localises to the plastid. Its subcellular location is the chloroplast. The catalysed reaction is L-glutamate + NADP(+) + H2O = 2-oxoglutarate + NH4(+) + NADPH + H(+). The sequence is that of NADP-specific glutamate dehydrogenase from Chlorella sorokiniana (Freshwater green alga).